A 444-amino-acid chain; its full sequence is Glycerol-3-phosphate transporter (444 aa).

Over 1-36 the chain is Cytoplasmic; it reads MLNIFKPAPHIERLDDSKMDAAYKRLRLQVFIGIFI. Residues 37-57 form a helical membrane-spanning segment; sequence GYAGYYLLRKNFAFAIPYLQE. Topologically, residues 58 to 63 are extracellular; the sequence is QGFSKT. The helical transmembrane segment at 64-84 threads the bilayer; sequence ELGLVLAAVSIAYGFSKFIMG. The Cytoplasmic segment spans residues 85-93; sequence MVSDRCNPR. A helical transmembrane segment spans residues 94 to 112; it reads YFLATGLFLSAIVNILFVS. Topologically, residues 113 to 120 are extracellular; the sequence is MPWVTSSV. A helical transmembrane segment spans residues 121–141; that stretch reads TIMFIFMFINGWFQGMGWPPC. Residues 142 to 160 lie on the Cytoplasmic side of the membrane; sequence GRTMAHWFSISERGTKMSI. The chain crosses the membrane as a helical span at residues 161–180; sequence WNVAHNIGGGILAPLVTLGI. Topologically, residues 181-189 are extracellular; it reads AMFVTWKSV. A helical transmembrane segment spans residues 190–207; it reads FFFPAIIAIIISFLIVLL. Residues 208–261 are Cytoplasmic-facing; it reads VRDTPQSCGLPPIEEYRNDYPKHAFKNQEKELTTKEILFQYVLNNKFLWYIAFA. Residues 262–282 traverse the membrane as a helical segment; that stretch reads NVFVYFVRYGVVDWAPTYLTE. Topologically, residues 283-287 are extracellular; that stretch reads AKGFS. A helical transmembrane segment spans residues 288–308; that stretch reads PEDSRWSYFLYEYAGIPGTIL. The Cytoplasmic segment spans residues 309 to 321; sequence CGWISDRFFKSRR. Residues 322–341 form a helical membrane-spanning segment; that stretch reads APAGVLFMAGVFIAVLVYWL. Over 342–346 the chain is Extracellular; the sequence is NPAGN. Residues 347–368 form a helical membrane-spanning segment; the sequence is PLVDNIALISIGFLIYGPVMLI. Topologically, residues 369–387 are cytoplasmic; that stretch reads GLQAIDLAPKKAAGTAAGL. The helical transmembrane segment at 388–409 threads the bilayer; it reads TGFFGYIGGSAFANAIMGFVVD. The Extracellular portion of the chain corresponds to 410–414; it reads RFNWN. A helical transmembrane segment spans residues 415–435; the sequence is GGFIMLISSCILAIVFLALTW. Residues 436–444 lie on the Cytoplasmic side of the membrane; the sequence is NTGKRAEHV.

It belongs to the major facilitator superfamily. Organophosphate:Pi antiporter (OPA) (TC 2.A.1.4) family.

The protein resides in the cell membrane. Responsible for glycerol-3-phosphate uptake. The protein is Glycerol-3-phosphate transporter (glpT) of Bacillus subtilis (strain 168).